The primary structure comprises 803 residues: Phosphoribosylformylglycinamidine synthase subunit PurL (803 aa).

The active site involves histidine 65. Residues tyrosine 68 and lysine 107 each coordinate ATP. Glutamate 109 lines the Mg(2+) pocket. Substrate contacts are provided by residues 110–113 (SHNH) and arginine 132. The active-site Proton acceptor is histidine 111. Aspartate 133 serves as a coordination point for Mg(2+). Residue glutamine 256 coordinates substrate. Residue aspartate 284 participates in Mg(2+) binding. 328 to 330 (ESQ) contacts substrate. Residues asparagine 537 and glycine 574 each coordinate ATP. Mg(2+) is bound at residue asparagine 575. Residue serine 577 participates in substrate binding.

Belongs to the FGAMS family. As to quaternary structure, monomer. Part of the FGAM synthase complex composed of 1 PurL, 1 PurQ and 2 PurS subunits.

The protein resides in the cytoplasm. The catalysed reaction is N(2)-formyl-N(1)-(5-phospho-beta-D-ribosyl)glycinamide + L-glutamine + ATP + H2O = 2-formamido-N(1)-(5-O-phospho-beta-D-ribosyl)acetamidine + L-glutamate + ADP + phosphate + H(+). It functions in the pathway purine metabolism; IMP biosynthesis via de novo pathway; 5-amino-1-(5-phospho-D-ribosyl)imidazole from N(2)-formyl-N(1)-(5-phospho-D-ribosyl)glycinamide: step 1/2. Part of the phosphoribosylformylglycinamidine synthase complex involved in the purines biosynthetic pathway. Catalyzes the ATP-dependent conversion of formylglycinamide ribonucleotide (FGAR) and glutamine to yield formylglycinamidine ribonucleotide (FGAM) and glutamate. The FGAM synthase complex is composed of three subunits. PurQ produces an ammonia molecule by converting glutamine to glutamate. PurL transfers the ammonia molecule to FGAR to form FGAM in an ATP-dependent manner. PurS interacts with PurQ and PurL and is thought to assist in the transfer of the ammonia molecule from PurQ to PurL. The sequence is that of Phosphoribosylformylglycinamidine synthase subunit PurL from Prochlorococcus marinus (strain NATL2A).